The primary structure comprises 213 residues: Protein DMP4 (213 aa).

The next 4 helical transmembrane spans lie at 51–71 (LANLLPTGTVLAFQLLSPIFS), 78–98 (LVSKIMTSTLVAICGFSCFIL), 142–162 (FIDFVHAFMSLFVFGAVVLFD), and 180–200 (VLTALPVGVGVFSSMLFATFP).

Belongs to the plant DMP1 protein family. In terms of tissue distribution, expressed in leaves, flowers and siliques, especially in vascular tissues.

Its subcellular location is the vacuole membrane. Involved in membrane remodeling. The polypeptide is Protein DMP4 (Arabidopsis thaliana (Mouse-ear cress)).